The chain runs to 438 residues: Transcription termination factor Rho (438 aa).

A Rho RNA-BD domain is found at 70 to 145 (YILFTGILEI…LKIEAINYLP (76 aa)). ATP contacts are provided by residues 188 to 193 (GKGQRA), 200 to 205 (RTGKTE), and R231.

The protein belongs to the Rho family. In terms of assembly, homohexamer. The homohexamer assembles into an open ring structure.

Its function is as follows. Facilitates transcription termination by a mechanism that involves Rho binding to the nascent RNA, activation of Rho's RNA-dependent ATPase activity, and release of the mRNA from the DNA template. The chain is Transcription termination factor Rho from Helicobacter pylori (strain J99 / ATCC 700824) (Campylobacter pylori J99).